Reading from the N-terminus, the 264-residue chain is Thymidylate synthase (264 aa).

A dUMP-binding site is contributed by Arg-21. His-51 contacts (6R)-5,10-methylene-5,6,7,8-tetrahydrofolate. Residue 126–127 (RR) coordinates dUMP. Cys-146 functions as the Nucleophile in the catalytic mechanism. Residues 166–169 (RSAD), Asn-177, and 207–209 (HIY) contribute to the dUMP site. Asp-169 is a binding site for (6R)-5,10-methylene-5,6,7,8-tetrahydrofolate. (6R)-5,10-methylene-5,6,7,8-tetrahydrofolate is bound at residue Ala-263.

This sequence belongs to the thymidylate synthase family. Bacterial-type ThyA subfamily. As to quaternary structure, homodimer.

Its subcellular location is the cytoplasm. It catalyses the reaction dUMP + (6R)-5,10-methylene-5,6,7,8-tetrahydrofolate = 7,8-dihydrofolate + dTMP. It participates in pyrimidine metabolism; dTTP biosynthesis. Functionally, catalyzes the reductive methylation of 2'-deoxyuridine-5'-monophosphate (dUMP) to 2'-deoxythymidine-5'-monophosphate (dTMP) while utilizing 5,10-methylenetetrahydrofolate (mTHF) as the methyl donor and reductant in the reaction, yielding dihydrofolate (DHF) as a by-product. This enzymatic reaction provides an intracellular de novo source of dTMP, an essential precursor for DNA biosynthesis. The chain is Thymidylate synthase from Brucella abortus (strain 2308).